A 96-amino-acid polypeptide reads, in one-letter code: Large ribosomal subunit protein uL23 (96 aa).

The protein belongs to the universal ribosomal protein uL23 family. In terms of assembly, part of the 50S ribosomal subunit. Contacts protein L29, and trigger factor when it is bound to the ribosome.

Its function is as follows. One of the early assembly proteins it binds 23S rRNA. One of the proteins that surrounds the polypeptide exit tunnel on the outside of the ribosome. Forms the main docking site for trigger factor binding to the ribosome. In Clostridium novyi (strain NT), this protein is Large ribosomal subunit protein uL23.